The chain runs to 418 residues: MFPKSMSIAEFDPEIKAAIEAEEVRQEEHIELIASENYASPRVMEAQGSVLTNKYAEGYPGKRYYGGCENVDVVEQLAIDRACELFGADWANVQPHSGSQANGAVYMAMLKAGDTVLGMSLDAGGHLTHGAKPNFSGKTYNAVQYGLDNETGLIDYDQVASLAREHKPKMIVAGFSAYSQIVDWQRFRDIADEVGAILLVDMAHVAGLVAAGVYPSPVGIADITTTTTHKTLGGPRGGLIMGKASEEIQKKINSAVFPGGQGGPLEHVIAAKAICFKEAMQDDFKGYQQQVVKNAQAMAGVFIERGFDVVSNGTENHLFLLSLIKQDITGKDADAALGRANITVNKNAVPNDPRSPFVTSGLRIGSPSITRRGFDEADAKALAGWICDILENMGDEGVIEQVKGKVKEICARLPVYER.

Residues L121 and 125-127 each bind (6S)-5,6,7,8-tetrahydrofolate; that span reads GHL. Position 230 is an N6-(pyridoxal phosphate)lysine (K230). 355 to 357 contacts (6S)-5,6,7,8-tetrahydrofolate; that stretch reads SPF.

It belongs to the SHMT family. In terms of assembly, homodimer. Requires pyridoxal 5'-phosphate as cofactor.

Its subcellular location is the cytoplasm. It catalyses the reaction (6R)-5,10-methylene-5,6,7,8-tetrahydrofolate + glycine + H2O = (6S)-5,6,7,8-tetrahydrofolate + L-serine. Its pathway is one-carbon metabolism; tetrahydrofolate interconversion. It participates in amino-acid biosynthesis; glycine biosynthesis; glycine from L-serine: step 1/1. Its function is as follows. Catalyzes the reversible interconversion of serine and glycine with tetrahydrofolate (THF) serving as the one-carbon carrier. This reaction serves as the major source of one-carbon groups required for the biosynthesis of purines, thymidylate, methionine, and other important biomolecules. Also exhibits THF-independent aldolase activity toward beta-hydroxyamino acids, producing glycine and aldehydes, via a retro-aldol mechanism. The sequence is that of Serine hydroxymethyltransferase from Alcanivorax borkumensis (strain ATCC 700651 / DSM 11573 / NCIMB 13689 / SK2).